Reading from the N-terminus, the 78-residue chain is NAD(P)H-quinone oxidoreductase subunit L (78 aa).

2 helical membrane-spanning segments follow: residues 10–30 and 48–68; these read LFVI…IPLG and LLIY…APFL.

The protein belongs to the complex I NdhL subunit family. In terms of assembly, NDH-1 can be composed of about 15 different subunits; different subcomplexes with different compositions have been identified which probably have different functions.

The protein resides in the cellular thylakoid membrane. It carries out the reaction a plastoquinone + NADH + (n+1) H(+)(in) = a plastoquinol + NAD(+) + n H(+)(out). It catalyses the reaction a plastoquinone + NADPH + (n+1) H(+)(in) = a plastoquinol + NADP(+) + n H(+)(out). NDH-1 shuttles electrons from an unknown electron donor, via FMN and iron-sulfur (Fe-S) centers, to quinones in the respiratory and/or the photosynthetic chain. The immediate electron acceptor for the enzyme in this species is believed to be plastoquinone. Couples the redox reaction to proton translocation, and thus conserves the redox energy in a proton gradient. Cyanobacterial NDH-1 also plays a role in inorganic carbon-concentration. The chain is NAD(P)H-quinone oxidoreductase subunit L from Prochlorococcus marinus (strain SARG / CCMP1375 / SS120).